The sequence spans 937 residues: Molybdenum cofactor sulfurase (937 aa).

K237 bears the N6-(pyridoxal phosphate)lysine mark. The active site involves C397. Disordered regions lie at residues 633–710, 756–795, and 897–921; these read GQGK…RRIL, PSPS…KLNP, and KEGT…GGNG. A compositionally biased stretch (basic residues) spans 638–652; the sequence is MTRHAKAHLQRHQHQ. One can recognise an MOSC domain in the interval 682-935; that stretch reads TPPSPPDSDT…VRVGDVVRPS (254 aa). Residues 756–767 are compositionally biased toward low complexity; the sequence is PSPSTPSASPSN. Residues 900 to 921 are compositionally biased toward gly residues; that stretch reads TGMGMGTGTGTGTGTRSMGGNG.

This sequence belongs to the class-V pyridoxal-phosphate-dependent aminotransferase family. MOCOS subfamily. Requires pyridoxal 5'-phosphate as cofactor.

It catalyses the reaction Mo-molybdopterin + L-cysteine + AH2 = thio-Mo-molybdopterin + L-alanine + A + H2O. It participates in cofactor biosynthesis; molybdopterin biosynthesis. Sulfurates the molybdenum cofactor. Sulfation of molybdenum is essential for xanthine dehydrogenase (XDH) and aldehyde oxidase (ADO) enzymes in which molybdenum cofactor is liganded by 1 oxygen and 1 sulfur atom in active form. In Neurospora crassa (strain ATCC 24698 / 74-OR23-1A / CBS 708.71 / DSM 1257 / FGSC 987), this protein is Molybdenum cofactor sulfurase (nit-13).